Here is a 422-residue protein sequence, read N- to C-terminus: Serine hydroxymethyltransferase (422 aa).

(6S)-5,6,7,8-tetrahydrofolate contacts are provided by residues leucine 120 and 124–126; that span reads GHL. N6-(pyridoxal phosphate)lysine is present on lysine 228.

The protein belongs to the SHMT family. In terms of assembly, homodimer. Pyridoxal 5'-phosphate serves as cofactor.

The protein localises to the cytoplasm. It catalyses the reaction (6R)-5,10-methylene-5,6,7,8-tetrahydrofolate + glycine + H2O = (6S)-5,6,7,8-tetrahydrofolate + L-serine. It functions in the pathway one-carbon metabolism; tetrahydrofolate interconversion. Its pathway is amino-acid biosynthesis; glycine biosynthesis; glycine from L-serine: step 1/1. Its function is as follows. Catalyzes the reversible interconversion of serine and glycine with tetrahydrofolate (THF) serving as the one-carbon carrier. This reaction serves as the major source of one-carbon groups required for the biosynthesis of purines, thymidylate, methionine, and other important biomolecules. Also exhibits THF-independent aldolase activity toward beta-hydroxyamino acids, producing glycine and aldehydes, via a retro-aldol mechanism. This chain is Serine hydroxymethyltransferase, found in Actinobacillus succinogenes (strain ATCC 55618 / DSM 22257 / CCUG 43843 / 130Z).